The sequence spans 694 residues: Elongation factor G (694 aa).

A tr-type G domain is found at 10 to 285 (EKTRNIGIMA…AVLDYLPSPV (276 aa)). GTP contacts are provided by residues 19 to 26 (AHIDAGKT), 83 to 87 (DTPGH), and 137 to 140 (NKMD).

The protein belongs to the TRAFAC class translation factor GTPase superfamily. Classic translation factor GTPase family. EF-G/EF-2 subfamily.

The protein resides in the cytoplasm. Its function is as follows. Catalyzes the GTP-dependent ribosomal translocation step during translation elongation. During this step, the ribosome changes from the pre-translocational (PRE) to the post-translocational (POST) state as the newly formed A-site-bound peptidyl-tRNA and P-site-bound deacylated tRNA move to the P and E sites, respectively. Catalyzes the coordinated movement of the two tRNA molecules, the mRNA and conformational changes in the ribosome. In Limosilactobacillus fermentum (strain NBRC 3956 / LMG 18251) (Lactobacillus fermentum), this protein is Elongation factor G.